The chain runs to 298 residues: MNEFERVRAYLTDLQDRICAAIEAADGQARFQEDLWQRAEGGGGRTRVLRDGAVFEQAGIGFSDVAGSRLPPSASANRPELAGASWRATGVSLVFHPLNPYVPTTHANVRFFQAQRDGEVVASWFGGGFDLTPFYPFDEDVQHWHRVARDLCAPFGDERYAAHKRWCDEYFFLRHRNETRGVGGLFFDDLHGDFERDFDYLRAVGDGFLDAYLPIVQQRKDTAYGEREREFQLYRRGRYVEFNLVYDRGTLFGLQSGGRSESILMSLPPRVRWEYGFNPEAGSAEARLADYLVPRDWL.

Ser92 is a binding site for substrate. 2 residues coordinate a divalent metal cation: His96 and His106. His106 serves as the catalytic Proton donor. 108-110 (NVR) provides a ligand contact to substrate. A divalent metal cation is bound by residues His145 and His175. Positions 239–274 (YVEFNLVYDRGTLFGLQSGGRSESILMSLPPRVRWE) are important for dimerization. 257–259 (GGR) lines the substrate pocket.

This sequence belongs to the aerobic coproporphyrinogen-III oxidase family. As to quaternary structure, homodimer. The cofactor is a divalent metal cation.

It localises to the cytoplasm. It carries out the reaction coproporphyrinogen III + O2 + 2 H(+) = protoporphyrinogen IX + 2 CO2 + 2 H2O. It participates in porphyrin-containing compound metabolism; protoporphyrin-IX biosynthesis; protoporphyrinogen-IX from coproporphyrinogen-III (O2 route): step 1/1. Involved in the heme biosynthesis. Catalyzes the aerobic oxidative decarboxylation of propionate groups of rings A and B of coproporphyrinogen-III to yield the vinyl groups in protoporphyrinogen-IX. In Stenotrophomonas maltophilia (strain R551-3), this protein is Oxygen-dependent coproporphyrinogen-III oxidase.